The chain runs to 79 residues: ATP synthase subunit c (79 aa).

The next 2 membrane-spanning stretches (helical) occupy residues 11 to 31 (MAAA…IGIL) and 53 to 73 (FFIV…LGLY).

This sequence belongs to the ATPase C chain family. As to quaternary structure, F-type ATPases have 2 components, F(1) - the catalytic core - and F(0) - the membrane proton channel. F(1) has five subunits: alpha(3), beta(3), gamma(1), delta(1), epsilon(1). F(0) has three main subunits: a(1), b(2) and c(10-14). The alpha and beta chains form an alternating ring which encloses part of the gamma chain. F(1) is attached to F(0) by a central stalk formed by the gamma and epsilon chains, while a peripheral stalk is formed by the delta and b chains.

It is found in the cell inner membrane. Its function is as follows. F(1)F(0) ATP synthase produces ATP from ADP in the presence of a proton or sodium gradient. F-type ATPases consist of two structural domains, F(1) containing the extramembraneous catalytic core and F(0) containing the membrane proton channel, linked together by a central stalk and a peripheral stalk. During catalysis, ATP synthesis in the catalytic domain of F(1) is coupled via a rotary mechanism of the central stalk subunits to proton translocation. In terms of biological role, key component of the F(0) channel; it plays a direct role in translocation across the membrane. A homomeric c-ring of between 10-14 subunits forms the central stalk rotor element with the F(1) delta and epsilon subunits. The polypeptide is ATP synthase subunit c (Yersinia enterocolitica serotype O:8 / biotype 1B (strain NCTC 13174 / 8081)).